A 338-amino-acid chain; its full sequence is Fructose-1,6-bisphosphatase 1 (338 aa).

At Ala-2 the chain carries N-acetylalanine. AMP is bound by residues 18 to 22 (VMEEG) and 28 to 32 (TGELT). Positions 69 and 98 each coordinate Mg(2+). 113–114 (KY) contributes to the AMP binding site. Mg(2+) is bound by residues Asp-119, Leu-121, and Asp-122. 122–125 (DGSS) lines the substrate pocket. Position 141 (Arg-141) interacts with AMP. Position 151 is an N6-succinyllysine (Lys-151). Substrate-binding positions include 213–216 (NEGY), 244–249 (RYVGSM), Tyr-265, and 275–277 (KLR). Phosphotyrosine occurs at positions 216, 245, and 265. Glu-281 is a Mg(2+) binding site.

Belongs to the FBPase class 1 family. Homotetramer. Mg(2+) serves as cofactor. In terms of tissue distribution, expressed in pancreatic islets.

The catalysed reaction is beta-D-fructose 1,6-bisphosphate + H2O = beta-D-fructose 6-phosphate + phosphate. The protein operates within carbohydrate biosynthesis; gluconeogenesis. With respect to regulation, subject to complex allosteric regulation. The enzyme can assume an active R-state, or an inactive T-state. Intermediate conformations may exist. AMP acts as an allosteric inhibitor. AMP binding affects the turnover of bound substrate and not the affinity for substrate. Fructose 2,6-bisphosphate acts as a competitive inhibitor. Fructose 2,6-bisphosphate and AMP have synergistic effects. Functionally, catalyzes the hydrolysis of fructose 1,6-bisphosphate to fructose 6-phosphate in the presence of divalent cations, acting as a rate-limiting enzyme in gluconeogenesis. Plays a role in regulating glucose sensing and insulin secretion of pancreatic beta-cells. Appears to modulate glycerol gluconeogenesis in liver. Important regulator of appetite and adiposity; increased expression of the protein in liver after nutrient excess increases circulating satiety hormones and reduces appetite-stimulating neuropeptides and thus seems to provide a feedback mechanism to limit weight gain. The protein is Fructose-1,6-bisphosphatase 1 (FBP1) of Homo sapiens (Human).